The primary structure comprises 831 residues: MNLMKSSGMFTLTAIGSCRIVSPVKRAQPYFNFQANFKRIYGFTHTSSEALQQIRFILGLIDIPEKVRPFIFRPNVNYSNTDVHSRSDFYIIEISSQKKIMAYGFCLQINYLTRHFYEFFSQTERACMYWSLATQGNRHKLLAYLKDDPCFAGMSEDDRALLSNINVEQMDEHAIEQDMMEIVQLLGRDRVMFMTHVDAVTRAGTVILSRSRLIKNVDTIAARMDIPCVNPTNLMEKWGQKRALEKNGDDLTHYTDMFGDAIVAAIFKGVINNTNHHLDEGRQEKQDQIREITLSITKQLADGDIIAASQQLFAALRNQQQDPVLIQLRSVIFSHLGYYEQAYQDISDVEKIIGTTDSTLRCRLRSLHGLARWREALSTAEMMLSNEIEDEEVLTVAAGSADALQLFDKSYHYWKRVLLLNPETQSGWVNFLSSTQYFNDGNAFSEAFHAGIQSQRLNDTFMETALSLAIKFSDELIFMHALEQLLRHESEFALTVLSTIHDTGLVIRTAFCIKNMSYHQALRTSYKDKIHDVFEAWNNTALSLHSVDDFVSLSTSLAYSYSAFMVYPHSRISRFNNEVKMAWRDKLREMYEREDYENILAGAKIVWPLLKFDPVGTVYCARTLVNLGAWKDACTLAHMTLIRNSNITSLQSIMLRSIRHINNIPFLIDLIANVMSITLSFQNASMNKLFEKECRNVATRALKYVRQKKTEGRLDEALSVLISLKRIEPDVSRLMREYKQIIRLFNESRKDGGSTITSYEHLDYAKKLLVFDSENAYALKYAALNAMHLRDYTQALQYWQRLEKVNGPTEPVTRQISTCITALQKNTSGKS.

It participates in glycan metabolism; Vi-antigen biosynthesis. Its pathway is capsule biogenesis; capsule polysaccharide biosynthesis. Its function is as follows. May be required for maturation of the Vi polysaccharide. This Salmonella typhi protein is Vi polysaccharide biosynthesis protein TviD (tviD).